Reading from the N-terminus, the 109-residue chain is Spermidine export protein MdtI (109 aa).

A run of 4 helical transmembrane segments spans residues 6 to 26 (WVHA…NVFL), 36 to 56 (IFGL…SQAV), 64 to 84 (AYAL…WILF), and 88 to 108 (LNRK…MVKL).

The protein belongs to the drug/metabolite transporter (DMT) superfamily. Small multidrug resistance (SMR) (TC 2.A.7.1) family. MdtI subfamily. As to quaternary structure, forms a complex with MdtJ.

It localises to the cell inner membrane. Its function is as follows. Catalyzes the excretion of spermidine. This chain is Spermidine export protein MdtI, found in Escherichia coli O81 (strain ED1a).